We begin with the raw amino-acid sequence, 339 residues long: D-erythrose-4-phosphate dehydrogenase (339 aa).

Residue 11–12 (RI) coordinates NAD(+). Substrate-binding positions include 153–155 (SCT), R199, 212–213 (TK), and R235. The Nucleophile role is filled by C154. N317 is a binding site for NAD(+).

This sequence belongs to the glyceraldehyde-3-phosphate dehydrogenase family. Epd subfamily. In terms of assembly, homotetramer.

The protein localises to the cytoplasm. The catalysed reaction is D-erythrose 4-phosphate + NAD(+) + H2O = 4-phospho-D-erythronate + NADH + 2 H(+). Its pathway is cofactor biosynthesis; pyridoxine 5'-phosphate biosynthesis; pyridoxine 5'-phosphate from D-erythrose 4-phosphate: step 1/5. Functionally, catalyzes the NAD-dependent conversion of D-erythrose 4-phosphate to 4-phosphoerythronate. The sequence is that of D-erythrose-4-phosphate dehydrogenase from Shewanella pealeana (strain ATCC 700345 / ANG-SQ1).